The following is a 343-amino-acid chain: 3-dehydroquinate synthase (343 aa).

Residues 86–90 (GALLD), 110–111 (TT), Lys123, and Lys132 each bind NAD(+). Residues Glu165, His229, and His243 each coordinate Zn(2+).

Belongs to the sugar phosphate cyclases superfamily. Dehydroquinate synthase family. Requires Co(2+) as cofactor. The cofactor is Zn(2+). NAD(+) serves as cofactor.

It is found in the cytoplasm. The catalysed reaction is 7-phospho-2-dehydro-3-deoxy-D-arabino-heptonate = 3-dehydroquinate + phosphate. It participates in metabolic intermediate biosynthesis; chorismate biosynthesis; chorismate from D-erythrose 4-phosphate and phosphoenolpyruvate: step 2/7. Catalyzes the conversion of 3-deoxy-D-arabino-heptulosonate 7-phosphate (DAHP) to dehydroquinate (DHQ). This is 3-dehydroquinate synthase from Pyrobaculum neutrophilum (strain DSM 2338 / JCM 9278 / NBRC 100436 / V24Sta) (Thermoproteus neutrophilus).